The sequence spans 583 residues: Potassium-transporting ATPase potassium-binding subunit (583 aa).

Helical transmembrane passes span 3–23 (NIIW…WPLG), 66–86 (MACV…LLMA), 135–155 (GLTV…FALI), 177–197 (VLYI…EQGV), 266–286 (LEML…GAKI), 293–313 (VAIF…TVQA), 402–422 (GLYG…LMVG), 440–460 (AVVV…LMCL), 506–526 (VLLG…ILAM), and 549–569 (LFIF…FFPA).

This sequence belongs to the KdpA family. The system is composed of three essential subunits: KdpA, KdpB and KdpC.

Its subcellular location is the cell inner membrane. Its function is as follows. Part of the high-affinity ATP-driven potassium transport (or Kdp) system, which catalyzes the hydrolysis of ATP coupled with the electrogenic transport of potassium into the cytoplasm. This subunit binds the periplasmic potassium ions and delivers the ions to the membrane domain of KdpB through an intramembrane tunnel. The polypeptide is Potassium-transporting ATPase potassium-binding subunit (Desulfovibrio desulfuricans (strain ATCC 27774 / DSM 6949 / MB)).